A 118-amino-acid polypeptide reads, in one-letter code: Small ribosomal subunit protein bTHXc (118 aa).

Residues 1–55 (MASLILGAPPRVTVALPSSRLSSSHSETAGVSLSCFTHQFSLSTSSSSSIPLVYC) constitute a chloroplast transit peptide. The tract at residues 61 to 118 (KTAKGKRFNHSFGNARPRNKSKGRGPERVPVPPAPPRKDKFENDEKIKIDIDESLFSN) is disordered. Residues 96 to 111 (PRKDKFENDEKIKIDI) show a composition bias toward basic and acidic residues. Position 117 is a phosphoserine (serine 117).

Belongs to the bacterial ribosomal protein bTHX family. As to quaternary structure, part of the 30S ribosomal subunit.

It is found in the plastid. It localises to the chloroplast. This is Small ribosomal subunit protein bTHXc (RPS31) from Arabidopsis thaliana (Mouse-ear cress).